The primary structure comprises 247 residues: HTH-type transcriptional regulator SarU (247 aa).

2 consecutive DNA-binding regions (H-T-H motif) follow at residues 53–76 (LKEIIGDILYKQSDVVKNIKSLSK) and 178–201 (LKDLFESIRFMYPQIVRSVNRLNN).

The protein belongs to the SarA family.

Its subcellular location is the cytoplasm. Its function is as follows. Positive regulator of RNAII and RNAIII in a cell density-dependent manner. It can contribute to the expression of virulence genes controlled by agr. May also regulate target genes via an agr-independent pathway. This is HTH-type transcriptional regulator SarU (sarU) from Staphylococcus aureus (strain NCTC 8325 / PS 47).